Here is a 279-residue protein sequence, read N- to C-terminus: MTPMKKQLDKSLGSRRGATATRAKERADNRNTGPAAIVRLLAFIPWNRVLLHVSIFCFWLLVLSALIAGVKWLDRPVATVQVVGELNYVSRGEVKELLSPLLHASFFTSDLEGVRKSLEAHPWVKRASISRLWPDAVQVDLEEEEPFVRWRNQGYINEAGRLFVKETGVVVNGLPALIGPPHSERLVFDNFQKWKAELAKVGLDVNGVIMESRGAWLISFTDGWELNLGKQDVEGRLHRFTVLFEKKLHQEREKIASVDARYTRGVAVKWKADVTPEQG.

The disordered stretch occupies residues 1–28 (MTPMKKQLDKSLGSRRGATATRAKERAD). Residues 1–48 (MTPMKKQLDKSLGSRRGATATRAKERADNRNTGPAAIVRLLAFIPWNR) are Cytoplasmic-facing. The chain crosses the membrane as a helical span at residues 49–69 (VLLHVSIFCFWLLVLSALIAG). Residues 70-279 (VKWLDRPVAT…WKADVTPEQG (210 aa)) lie on the Periplasmic side of the membrane. Residues 75-144 (RPVATVQVVG…DAVQVDLEEE (70 aa)) enclose the POTRA domain.

Belongs to the FtsQ/DivIB family. FtsQ subfamily. Part of a complex composed of FtsB, FtsL and FtsQ.

The protein resides in the cell inner membrane. Functionally, essential cell division protein. May link together the upstream cell division proteins, which are predominantly cytoplasmic, with the downstream cell division proteins, which are predominantly periplasmic. May control correct divisome assembly. The sequence is that of Cell division protein FtsQ from Hahella chejuensis (strain KCTC 2396).